The primary structure comprises 175 residues: Co-chaperone protein HscB homolog (175 aa).

A J domain is found at 7-79; it reads SHFDLFHLPA…LKRATYLLHL (73 aa).

It belongs to the HscB family. As to quaternary structure, interacts with HscA and stimulates its ATPase activity.

Its function is as follows. Co-chaperone involved in the maturation of iron-sulfur cluster-containing proteins. Seems to help targeting proteins to be folded toward HscA. This Burkholderia mallei (strain ATCC 23344) protein is Co-chaperone protein HscB homolog.